The following is a 115-amino-acid chain: Ribonuclease P protein component (115 aa).

It belongs to the RnpA family. Consists of a catalytic RNA component (M1 or rnpB) and a protein subunit.

It catalyses the reaction Endonucleolytic cleavage of RNA, removing 5'-extranucleotides from tRNA precursor.. Its function is as follows. RNaseP catalyzes the removal of the 5'-leader sequence from pre-tRNA to produce the mature 5'-terminus. It can also cleave other RNA substrates such as 4.5S RNA. The protein component plays an auxiliary but essential role in vivo by binding to the 5'-leader sequence and broadening the substrate specificity of the ribozyme. In Bacillus cereus (strain G9842), this protein is Ribonuclease P protein component.